The sequence spans 581 residues: Protein alan shepard (581 aa).

A compositionally biased stretch (pro residues) spans 1-10 (MHPRYSPAPP). The segment at 1–73 (MHPRYSPAPP…AVTAAPPTPR (73 aa)) is disordered. Y5 is subject to Phosphotyrosine. Over residues 35 to 54 (ANNSQQLPPQMPRSQNYANG) the composition is skewed to polar residues. Positions 55–68 (SSSSAAAASAVTAA) are enriched in low complexity. Residues Y128 and Y146 each carry the phosphotyrosine modification. Positions 168 to 226 (PATTTYGQRVPTAASPSNTNSSSSSNTGSQSGTLSTSLSHTTNTNTNMGPNGTAQNQNQ) are enriched in low complexity. The segment at 168-234 (PATTTYGQRV…NQQGGGGEQL (67 aa)) is disordered. 2 consecutive RRM domains span residues 237–310 (TNLY…MAKQ) and 316–395 (TNLY…FADG). Residues 555 to 581 (MTDSEQASTAASPDEAYTQYPHQAAPK) form a disordered region.

Functionally, has a role in the perception of gravity. The chain is Protein alan shepard from Drosophila willistoni (Fruit fly).